The sequence spans 283 residues: Pantothenate synthetase (283 aa).

An ATP-binding site is contributed by 30–37 (MGYYHSGH). The active-site Proton donor is the His-37. Residue Gln-61 coordinates (R)-pantoate. Residue Gln-61 participates in beta-alanine binding. 147-150 (GQKD) lines the ATP pocket. Position 153 (Gln-153) interacts with (R)-pantoate. ATP contacts are provided by residues Val-176 and 184-187 (MSSR).

Belongs to the pantothenate synthetase family. As to quaternary structure, homodimer.

The protein resides in the cytoplasm. It carries out the reaction (R)-pantoate + beta-alanine + ATP = (R)-pantothenate + AMP + diphosphate + H(+). Its pathway is cofactor biosynthesis; (R)-pantothenate biosynthesis; (R)-pantothenate from (R)-pantoate and beta-alanine: step 1/1. Its function is as follows. Catalyzes the condensation of pantoate with beta-alanine in an ATP-dependent reaction via a pantoyl-adenylate intermediate. In Nitratidesulfovibrio vulgaris (strain DSM 19637 / Miyazaki F) (Desulfovibrio vulgaris), this protein is Pantothenate synthetase.